The primary structure comprises 336 residues: UDP-3-O-acylglucosamine N-acyltransferase (336 aa).

His-233 functions as the Proton acceptor in the catalytic mechanism.

Belongs to the transferase hexapeptide repeat family. LpxD subfamily. As to quaternary structure, homotrimer.

It carries out the reaction a UDP-3-O-[(3R)-3-hydroxyacyl]-alpha-D-glucosamine + a (3R)-hydroxyacyl-[ACP] = a UDP-2-N,3-O-bis[(3R)-3-hydroxyacyl]-alpha-D-glucosamine + holo-[ACP] + H(+). The protein operates within bacterial outer membrane biogenesis; LPS lipid A biosynthesis. Functionally, catalyzes the N-acylation of UDP-3-O-acylglucosamine using 3-hydroxyacyl-ACP as the acyl donor. Is involved in the biosynthesis of lipid A, a phosphorylated glycolipid that anchors the lipopolysaccharide to the outer membrane of the cell. This is UDP-3-O-acylglucosamine N-acyltransferase from Helicobacter pylori (strain J99 / ATCC 700824) (Campylobacter pylori J99).